Reading from the N-terminus, the 519-residue chain is Cytosol aminopeptidase (519 aa).

An N6-succinyllysine modification is found at lysine 45. The residue at position 54 (serine 54) is a Phosphoserine. An N6-succinyllysine mark is found at lysine 61 and lysine 103. A phosphoserine mark is found at serine 180 and serine 194. The Zn(2+) site is built by leucine 202 and methionine 203. Lysine 221 carries the N6-acetyllysine; alternate modification. Lysine 221 carries the post-translational modification N6-succinyllysine; alternate. Residue serine 238 is modified to Phosphoserine. Residues lysine 282 and aspartate 287 each contribute to the Zn(2+) site. Lysine 282, aspartate 287, serine 292, and lysine 294 together coordinate substrate. Aspartate 287 contacts Mg(2+). Residue lysine 294 is part of the active site. Zn(2+)-binding residues include arginine 303, aspartate 305, aspartate 364, and glutamate 366. The substrate site is built by aspartate 305 and aspartate 364. Positions 364 and 366 each coordinate Mg(2+). Arginine 368 is a catalytic residue. The residue at position 455 (lysine 455) is an N6-acetyllysine; alternate. Lysine 455 is modified (N6-succinyllysine; alternate). The residue at position 476 (lysine 476) is an N6-succinyllysine. Lysine 489 is modified (N6-acetyllysine; alternate). Residue lysine 489 is modified to N6-succinyllysine; alternate.

This sequence belongs to the peptidase M17 family. Homohexamer. Zn(2+) serves as cofactor. Mn(2+) is required as a cofactor.

The protein localises to the cytoplasm. The enzyme catalyses Release of an N-terminal amino acid, Xaa-|-Yaa-, in which Xaa is preferably Leu, but may be other amino acids including Pro although not Arg or Lys, and Yaa may be Pro. Amino acid amides and methyl esters are also readily hydrolyzed, but rates on arylamides are exceedingly low.. It catalyses the reaction an S-substituted L-cysteinylglycine + H2O = an S-substituted L-cysteine + glycine. The catalysed reaction is L-cysteinylglycine + H2O = L-cysteine + glycine. It carries out the reaction S-benzyl-L-cysteinylglycine + H2O = S-benzyl-L-cysteine + glycine. The enzyme catalyses Release of N-terminal proline from a peptide.. In terms of biological role, cytosolic metallopeptidase that catalyzes the removal of unsubstituted N-terminal hydrophobic amino acids from various peptides. The presence of Zn(2+) ions is essential for the peptidase activity, and the association with other cofactors can modulate the substrate spectificity of the enzyme. For instance, in the presence of Mn(2+), it displays a specific Cys-Gly hydrolyzing activity of Cys-Gly-S-conjugates. Involved in the metabolism of glutathione and in the degradation of glutathione S-conjugates, which may play a role in the control of the cell redox status. This Mus musculus (Mouse) protein is Cytosol aminopeptidase.